Here is a 432-residue protein sequence, read N- to C-terminus: Adenylosuccinate synthetase (432 aa).

GTP is bound by residues 13 to 19 (GDEGKGK) and 41 to 43 (GHT). Aspartate 14 functions as the Proton acceptor in the catalytic mechanism. Aspartate 14 and glycine 41 together coordinate Mg(2+). IMP is bound by residues 14 to 17 (DEGK), 39 to 42 (NAGH), threonine 130, arginine 144, glutamine 225, threonine 240, and arginine 304. Catalysis depends on histidine 42, which acts as the Proton donor. 300–306 (ATTGRRR) contributes to the substrate binding site. GTP is bound by residues arginine 306, 332-334 (KLD), and 415-417 (STG).

The protein belongs to the adenylosuccinate synthetase family. Homodimer. It depends on Mg(2+) as a cofactor.

The protein localises to the cytoplasm. It carries out the reaction IMP + L-aspartate + GTP = N(6)-(1,2-dicarboxyethyl)-AMP + GDP + phosphate + 2 H(+). Its pathway is purine metabolism; AMP biosynthesis via de novo pathway; AMP from IMP: step 1/2. Plays an important role in the de novo pathway of purine nucleotide biosynthesis. Catalyzes the first committed step in the biosynthesis of AMP from IMP. The protein is Adenylosuccinate synthetase of Serratia proteamaculans (strain 568).